Here is a 408-residue protein sequence, read N- to C-terminus: Digeranylgeranylglycerophospholipid reductase 1 (408 aa).

Positions 15, 34, 45, 46, 48, 99, 123, 279, 291, and 292 each coordinate FAD.

This sequence belongs to the geranylgeranyl reductase family. DGGGPL reductase subfamily. FAD serves as cofactor.

The catalysed reaction is a 2,3-bis-O-phytanyl-sn-glycerol 1-phospholipid + 8 oxidized 2[4Fe-4S]-[ferredoxin] = a 2,3-bis-O-(geranylgeranyl)-sn-glycerol 1-phospholipid + 8 reduced 2[4Fe-4S]-[ferredoxin] + 16 H(+). It carries out the reaction 2,3-bis-O-(phytanyl)-sn-glycerol 1-phosphate + 8 oxidized 2[4Fe-4S]-[ferredoxin] = 2,3-bis-O-(geranylgeranyl)-sn-glycerol 1-phosphate + 8 reduced 2[4Fe-4S]-[ferredoxin] + 16 H(+). The enzyme catalyses a 2,3-bis-O-phytanyl-sn-glycerol 1-phospholipid + 8 A = a 2,3-bis-O-(geranylgeranyl)-sn-glycerol 1-phospholipid + 8 AH2. It catalyses the reaction CDP-2,3-bis-O-(geranylgeranyl)-sn-glycerol + 8 AH2 = CDP-2,3-bis-O-(phytanyl)-sn-glycerol + 8 A. The catalysed reaction is archaetidylserine + 8 AH2 = 2,3-bis-O-phytanyl-sn-glycero-3-phospho-L-serine + 8 A. It participates in membrane lipid metabolism; glycerophospholipid metabolism. Functionally, is involved in the reduction of 2,3-digeranylgeranylglycerophospholipids (unsaturated archaeols) into 2,3-diphytanylglycerophospholipids (saturated archaeols) in the biosynthesis of archaeal membrane lipids. Catalyzes the formation of archaetidic acid (2,3-di-O-phytanyl-sn-glyceryl phosphate) from 2,3-di-O-geranylgeranylglyceryl phosphate (DGGGP) via the hydrogenation of each double bond of the isoprenoid chains. Is also probably able to reduce double bonds of geranyl groups in CDP-2,3-bis-O-(geranylgeranyl)-sn-glycerol and archaetidylserine, thus acting at various stages in the biosynthesis of archaeal membrane lipids. The chain is Digeranylgeranylglycerophospholipid reductase 1 from Methanococcoides burtonii (strain DSM 6242 / NBRC 107633 / OCM 468 / ACE-M).